Here is a 334-residue protein sequence, read N- to C-terminus: MRIVIDGMGGDKAPEEIIKGAVSALDSYEDIELIITGIEKHLNRELNKYNFPEDRVKIIPASEIISMNESPSKALRKKKDSSIVKGINLVKEDKATAFISAGNTGAVMAGGLFLLGRLPSIKRPAIATVFPSRNGGTLVIDAGANVDSKPENLNQFAIMGQIYSKHVLGVKNPRVGLLSIGEEQAKGNQLTKGAFSLLDEDKRIINFVGNVEGRDIFNGSCDVVVCDGFVGNVVLKTTEGAASYIFDLIKDTFNKNILTKLSGLMIKPFLKKQMALVDYRQYGGAPLLGVNGVVIISHGSSNSTAIKNAIKVAKETVNKNVVGLIKQEINKDGE.

Belongs to the PlsX family. As to quaternary structure, homodimer. Probably interacts with PlsY.

The protein resides in the cytoplasm. The enzyme catalyses a fatty acyl-[ACP] + phosphate = an acyl phosphate + holo-[ACP]. The protein operates within lipid metabolism; phospholipid metabolism. In terms of biological role, catalyzes the reversible formation of acyl-phosphate (acyl-PO(4)) from acyl-[acyl-carrier-protein] (acyl-ACP). This enzyme utilizes acyl-ACP as fatty acyl donor, but not acyl-CoA. This is Phosphate acyltransferase from Halothermothrix orenii (strain H 168 / OCM 544 / DSM 9562).